A 360-amino-acid chain; its full sequence is Holliday junction branch migration complex subunit RuvB (360 aa).

Positions 1–46 (MAIKRSGNSDRPAKNPSSTPGTNAPTLLSPTPTHQEKETSEEKIRP) are disordered. A large ATPase domain (RuvB-L) region spans residues 13 to 205 (AKNPSSTPGT…FGLIQRLRFY (193 aa)). A compositionally biased stretch (polar residues) spans 15–33 (NPSSTPGTNAPTLLSPTPT). The segment covering 34–46 (HQEKETSEEKIRP) has biased composition (basic and acidic residues). ATP-binding positions include Ile-44, Arg-45, Gly-86, Lys-89, Thr-90, Thr-91, 152 to 154 (EDY), Arg-195, Tyr-205, and Arg-242. Thr-90 serves as a coordination point for Mg(2+). Residues 206-276 (EVDELTLIVL…LASEALDIYQ (71 aa)) are small ATPAse domain (RuvB-S). Residues 279 to 360 (KQGLDWIDRL…LTSEEQLSIF (82 aa)) are head domain (RuvB-H). The DNA site is built by Arg-334 and Arg-339.

This sequence belongs to the RuvB family. Homohexamer. Forms an RuvA(8)-RuvB(12)-Holliday junction (HJ) complex. HJ DNA is sandwiched between 2 RuvA tetramers; dsDNA enters through RuvA and exits via RuvB. An RuvB hexamer assembles on each DNA strand where it exits the tetramer. Each RuvB hexamer is contacted by two RuvA subunits (via domain III) on 2 adjacent RuvB subunits; this complex drives branch migration. In the full resolvosome a probable DNA-RuvA(4)-RuvB(12)-RuvC(2) complex forms which resolves the HJ.

The protein localises to the cytoplasm. It catalyses the reaction ATP + H2O = ADP + phosphate + H(+). Functionally, the RuvA-RuvB-RuvC complex processes Holliday junction (HJ) DNA during genetic recombination and DNA repair, while the RuvA-RuvB complex plays an important role in the rescue of blocked DNA replication forks via replication fork reversal (RFR). RuvA specifically binds to HJ cruciform DNA, conferring on it an open structure. The RuvB hexamer acts as an ATP-dependent pump, pulling dsDNA into and through the RuvAB complex. RuvB forms 2 homohexamers on either side of HJ DNA bound by 1 or 2 RuvA tetramers; 4 subunits per hexamer contact DNA at a time. Coordinated motions by a converter formed by DNA-disengaged RuvB subunits stimulates ATP hydrolysis and nucleotide exchange. Immobilization of the converter enables RuvB to convert the ATP-contained energy into a lever motion, pulling 2 nucleotides of DNA out of the RuvA tetramer per ATP hydrolyzed, thus driving DNA branch migration. The RuvB motors rotate together with the DNA substrate, which together with the progressing nucleotide cycle form the mechanistic basis for DNA recombination by continuous HJ branch migration. Branch migration allows RuvC to scan DNA until it finds its consensus sequence, where it cleaves and resolves cruciform DNA. This Rippkaea orientalis (strain PCC 8801 / RF-1) (Cyanothece sp. (strain PCC 8801)) protein is Holliday junction branch migration complex subunit RuvB.